We begin with the raw amino-acid sequence, 47 residues long: DRDSCVDKSRCQKYGPYGQCTDCCKKAGHTGGTCIYFKCKCGAESGR.

4 disulfide bridges follow: Cys-5–Cys-23, Cys-11–Cys-34, Cys-20–Cys-39, and Cys-24–Cys-41.

Belongs to the ergtoxin family. Gamma-KTx 5 subfamily. In terms of tissue distribution, expressed by the venom gland.

The protein localises to the secreted. Reversibly blocks Kv11/ERG potassium channels. The polypeptide is Potassium channel toxin gamma-KTx 5.2 (Centruroides gracilis (Slenderbrown scorpion)).